The following is a 354-amino-acid chain: Glycerol-3-phosphate dehydrogenase [NAD(P)+] (354 aa).

NADPH-binding residues include Ser27, Phe28, Arg48, and Lys121. Residues Lys121 and Gly149 each contribute to the sn-glycerol 3-phosphate site. Ala153 contacts NADPH. Sn-glycerol 3-phosphate-binding residues include Lys204, Asp257, Ser267, Arg268, and Asn269. Lys204 (proton acceptor) is an active-site residue. Arg268 contacts NADPH. Val292 and Glu294 together coordinate NADPH.

This sequence belongs to the NAD-dependent glycerol-3-phosphate dehydrogenase family.

It localises to the cytoplasm. It carries out the reaction sn-glycerol 3-phosphate + NAD(+) = dihydroxyacetone phosphate + NADH + H(+). The catalysed reaction is sn-glycerol 3-phosphate + NADP(+) = dihydroxyacetone phosphate + NADPH + H(+). The protein operates within membrane lipid metabolism; glycerophospholipid metabolism. Its function is as follows. Catalyzes the reduction of the glycolytic intermediate dihydroxyacetone phosphate (DHAP) to sn-glycerol 3-phosphate (G3P), the key precursor for phospholipid synthesis. This Pseudomonas fluorescens (strain Pf0-1) protein is Glycerol-3-phosphate dehydrogenase [NAD(P)+].